The sequence spans 76 residues: Histone acetyltransferase (76 aa).

In terms of assembly, physically interacts with histone H3 in infected macrophages.

It localises to the secreted. The protein localises to the host cytoplasm. It is found in the host nucleus. The catalysed reaction is L-lysyl-[protein] + acetyl-CoA = N(6)-acetyl-L-lysyl-[protein] + CoA + H(+). Is completely inhibited by anacardic acid, an inhibitor of HAT activity. Histone acetyltransferase, which by binding to the host chromatin, may manipulate the expression of host genes involved in anti-inflammatory responses to evade clearance and to survive in the intracellular milieu. Acetylates histone H3 at the 'Lys-9' and 'Lys-14' positions. This Mycobacterium tuberculosis (strain CDC 1551 / Oshkosh) protein is Histone acetyltransferase.